A 541-amino-acid polypeptide reads, in one-letter code: DNA polymerase epsilon subunit B (541 aa).

It belongs to the DNA polymerase epsilon subunit B family. As to quaternary structure, heterotetramer. Consists of four subunits: POL2, DPB2, DPB3 and DPB4.

The protein resides in the nucleus. As accessory component of the DNA polymerase epsilon (DNA polymerase II) participates in chromosomal DNA replication. The polypeptide is DNA polymerase epsilon subunit B (DPB2) (Cryptococcus neoformans var. neoformans serotype D (strain B-3501A) (Filobasidiella neoformans)).